Reading from the N-terminus, the 158-residue chain is uncharacterized protein (158 aa).

Positions 12 to 73 constitute an HTH asnC-type domain; it reads LDEIDRAILR…LINPFKAGYE (62 aa). A DNA-binding region (H-T-H motif) is located at residues 31–50; sequence YSEISRRINVPESTVRARVN.

This is an uncharacterized protein from Pyrococcus horikoshii (strain ATCC 700860 / DSM 12428 / JCM 9974 / NBRC 100139 / OT-3).